Reading from the N-terminus, the 255-residue chain is High-affinity branched-chain amino acid transport ATP-binding protein BraF (255 aa).

Residues 6–254 enclose the ABC transporter domain; the sequence is LEVSGLTMRF…PDVIKAYLGE (249 aa). Position 38-45 (38-45) interacts with ATP; sequence GPNGAGKT.

It belongs to the ABC transporter superfamily.

The protein localises to the cell inner membrane. Functionally, component of the high affinity leucine, isoleucine, valine, transport system (LIV-I), which is operative without Na(+) and is specific for alanine and threonine, in addition to branched-chain amino acids. The sequence is that of High-affinity branched-chain amino acid transport ATP-binding protein BraF (braF) from Pseudomonas aeruginosa (strain ATCC 15692 / DSM 22644 / CIP 104116 / JCM 14847 / LMG 12228 / 1C / PRS 101 / PAO1).